A 308-amino-acid chain; its full sequence is Elongation factor Ts (308 aa).

The interval 80–83 is involved in Mg(2+) ion dislocation from EF-Tu; it reads TDFV.

Belongs to the EF-Ts family.

The protein resides in the cytoplasm. Functionally, associates with the EF-Tu.GDP complex and induces the exchange of GDP to GTP. It remains bound to the aminoacyl-tRNA.EF-Tu.GTP complex up to the GTP hydrolysis stage on the ribosome. The protein is Elongation factor Ts of Sphingopyxis alaskensis (strain DSM 13593 / LMG 18877 / RB2256) (Sphingomonas alaskensis).